Consider the following 1055-residue polypeptide: RapA guanosine triphosphatase-activating protein 1 (1055 aa).

Disordered stretches follow at residues 76–100 (LSPQ…EEER), 256–292 (NHQP…SSLT), 418–525 (QQLL…FLGV), 544–570 (THAT…SPPL), 603–629 (TTQL…PPSE), and 943–969 (NNNS…NLPT). Positions 89-100 (QHEKITPEEEER) are enriched in basic and acidic residues. 3 stretches are compositionally biased toward low complexity: residues 262–292 (STPR…SSLT), 442–455 (DFNL…NNNN), and 469–482 (TTTT…NNNN). Positions 483–494 (ISPQHSGTSGSP) are enriched in polar residues. Composition is skewed to low complexity over residues 603–622 (TTQL…TSQP) and 943–966 (NNNS…SDSN). Residues 779–1048 (LIQFEAKNIH…RTRKEFLHSF (270 aa)) form the Rap-GAP domain.

The protein localises to the cytoplasm. The protein resides in the cell cortex. Its function is as follows. Mediates the deactivation of rap1 and plays an important role in spatially and temporally regulating cell adhesion and chemotaxis by controlling attachment disassembly in the leading edge through the regulation of myosin II assembly and disassembly. Overexpression leads to defective chemotaxis. The protein is RapA guanosine triphosphatase-activating protein 1 (rapgap1) of Dictyostelium discoideum (Social amoeba).